The primary structure comprises 886 residues: uncharacterized protein (886 aa).

A signal peptide spans 1 to 20; sequence MKIIKSLILLVLFMASPAKG. 5 consecutive transmembrane segments (helical) span residues 520 to 540, 609 to 629, 647 to 667, 680 to 700, and 779 to 799; these read VTIF…VEVV, LLFI…IITI, VIAF…IILM, ISIL…FLLI, and LLFY…TIVV. Residues 856–886 are disordered; that stretch reads EARKPQGGGEHTGKFFQNRNDVKPEQTERND. Over residues 875-886 the composition is skewed to basic and acidic residues; it reads NDVKPEQTERND.

It belongs to the TrbL/VirB6 family.

Its subcellular location is the cell membrane. This is an uncharacterized protein from Rickettsia bellii (strain RML369-C).